The sequence spans 90 residues: Small ribosomal subunit protein bS16 (90 aa).

It belongs to the bacterial ribosomal protein bS16 family.

The protein is Small ribosomal subunit protein bS16 of Bacillus pumilus (strain SAFR-032).